Reading from the N-terminus, the 169-residue chain is Probable calcium-binding protein CML13 (169 aa).

Residues M1–R26 are disordered. Basic residues predominate over residues G15–Q24. 4 consecutive EF-hand domains span residues Q24–E59, M60–E95, D97–N132, and F133–G168. The Ca(2+) site is built by D37, D39, S41, T43, E48, D73, D75, S77, S79, E84, D110, D112, N114, K116, D121, D146, N148, D150, E152, and E157.

Functionally, potential calcium sensor. The protein is Probable calcium-binding protein CML13 (CML13) of Oryza sativa subsp. japonica (Rice).